We begin with the raw amino-acid sequence, 150 residues long: Ribonuclease H (150 aa).

Residues 1 to 142 (MSDSVEIFTD…ADQLANRGVD (142 aa)) enclose the RNase H type-1 domain. Mg(2+)-binding residues include D10, E48, D70, and D134.

This sequence belongs to the RNase H family. As to quaternary structure, monomer. Mg(2+) serves as cofactor.

The protein resides in the cytoplasm. The catalysed reaction is Endonucleolytic cleavage to 5'-phosphomonoester.. In terms of biological role, endonuclease that specifically degrades the RNA of RNA-DNA hybrids. This chain is Ribonuclease H, found in Pseudomonas fluorescens (strain ATCC BAA-477 / NRRL B-23932 / Pf-5).